The primary structure comprises 282 residues: Tyrosine recombinase XerA (282 aa).

The region spanning 2-79 is the Core-binding (CB) domain; the sequence is SEPNEVIEEF…ALRAYFRFEG (78 aa). Residues 95–271 enclose the Tyr recombinase domain; sequence SLPKALTREE…TVEHLRKAQE (177 aa). Catalysis depends on residues arginine 132, lysine 157, histidine 223, arginine 226, and histidine 249. Residue tyrosine 258 is the O-(3'-phospho-DNA)-tyrosine intermediate of the active site.

This sequence belongs to the 'phage' integrase family. XerA subfamily.

It localises to the cytoplasm. Site-specific tyrosine recombinase, which acts by catalyzing the cutting and rejoining of the recombining DNA molecules. The polypeptide is Tyrosine recombinase XerA (Thermococcus kodakarensis (strain ATCC BAA-918 / JCM 12380 / KOD1) (Pyrococcus kodakaraensis (strain KOD1))).